We begin with the raw amino-acid sequence, 249 residues long: Exosome complex component Rrp41 (249 aa).

This sequence belongs to the RNase PH family. Rrp41 subfamily. As to quaternary structure, component of the archaeal exosome complex. Forms a hexameric ring-like arrangement composed of 3 Rrp41-Rrp42 heterodimers. The hexameric ring associates with a trimer of Rrp4 and/or Csl4 subunits.

Its subcellular location is the cytoplasm. Its function is as follows. Catalytic component of the exosome, which is a complex involved in RNA degradation. Has 3'-&gt;5' exoribonuclease activity. Can also synthesize heteromeric RNA-tails. In Pyrococcus abyssi (strain GE5 / Orsay), this protein is Exosome complex component Rrp41.